A 273-amino-acid chain; its full sequence is Bis(5'-nucleosyl)-tetraphosphatase, symmetrical (273 aa).

Belongs to the Ap4A hydrolase family.

It carries out the reaction P(1),P(4)-bis(5'-adenosyl) tetraphosphate + H2O = 2 ADP + 2 H(+). In terms of biological role, hydrolyzes diadenosine 5',5'''-P1,P4-tetraphosphate to yield ADP. This chain is Bis(5'-nucleosyl)-tetraphosphatase, symmetrical, found in Aeromonas hydrophila subsp. hydrophila (strain ATCC 7966 / DSM 30187 / BCRC 13018 / CCUG 14551 / JCM 1027 / KCTC 2358 / NCIMB 9240 / NCTC 8049).